The sequence spans 29 residues: Cyclotide mech-7 (29 aa).

The cyclopeptide (Gly-Asp) cross-link spans 1–29; sequence GIPICGETCTIGTCNTPGCTCSWPVCTRD. 3 disulfides stabilise this stretch: C5–C19, C9–C21, and C14–C26.

In terms of processing, this is a cyclic peptide. Contains 3 disulfide bonds.

Its function is as follows. Probably participates in a plant defense mechanism (Potential). Binds to and induces leakage in phospholipd membranes, particularly ones containing 1-palmitoyl-2-oleophosphatidylethanolamine (POPE). This Melicytus chathamicus (Chatham Island mahoe) protein is Cyclotide mech-7.